The following is a 1175-amino-acid chain: DNA-directed RNA polymerase subunit beta (1175 aa).

The disordered stretch occupies residues 12 to 33; the sequence is QSKTDRPQSSSNGSSSLNGSVP. Residues 20–31 show a composition bias toward low complexity; sequence SSSNGSSSLNGS.

The protein belongs to the RNA polymerase beta chain family. The RNAP catalytic core consists of 2 alpha, 1 beta, 1 beta' and 1 omega subunit. When a sigma factor is associated with the core the holoenzyme is formed, which can initiate transcription.

It catalyses the reaction RNA(n) + a ribonucleoside 5'-triphosphate = RNA(n+1) + diphosphate. Its function is as follows. DNA-dependent RNA polymerase catalyzes the transcription of DNA into RNA using the four ribonucleoside triphosphates as substrates. The sequence is that of DNA-directed RNA polymerase subunit beta from Mycobacterium avium (strain 104).